Here is a 461-residue protein sequence, read N- to C-terminus: Bifunctional protein GlmU (461 aa).

A pyrophosphorylase region spans residues 1-229 (MLKKEINVVI…CKEILGVNNK (229 aa)). Residues 11-14 (LAAG), Lys25, Gln76, 81-82 (GT), 103-105 (YGD), Gly140, Glu154, and Asn227 each bind UDP-N-acetyl-alpha-D-glucosamine. Asp105 lines the Mg(2+) pocket. Residue Asn227 coordinates Mg(2+). The segment at 230 to 250 (LQLSILEKIFRKKQVNDLLLS) is linker. Residues 251-461 (GVTLKDPNHF…PQKIIKKTDQ (211 aa)) are N-acetyltransferase. UDP-N-acetyl-alpha-D-glucosamine contacts are provided by Arg333 and Lys351. Residue His363 is the Proton acceptor of the active site. Tyr366 and Asn377 together coordinate UDP-N-acetyl-alpha-D-glucosamine. Residues Ala380, 386–387 (NY), and Ala423 each bind acetyl-CoA.

In the N-terminal section; belongs to the N-acetylglucosamine-1-phosphate uridyltransferase family. It in the C-terminal section; belongs to the transferase hexapeptide repeat family. As to quaternary structure, homotrimer. Requires Mg(2+) as cofactor.

It is found in the cytoplasm. It catalyses the reaction alpha-D-glucosamine 1-phosphate + acetyl-CoA = N-acetyl-alpha-D-glucosamine 1-phosphate + CoA + H(+). The catalysed reaction is N-acetyl-alpha-D-glucosamine 1-phosphate + UTP + H(+) = UDP-N-acetyl-alpha-D-glucosamine + diphosphate. Its pathway is nucleotide-sugar biosynthesis; UDP-N-acetyl-alpha-D-glucosamine biosynthesis; N-acetyl-alpha-D-glucosamine 1-phosphate from alpha-D-glucosamine 6-phosphate (route II): step 2/2. It functions in the pathway nucleotide-sugar biosynthesis; UDP-N-acetyl-alpha-D-glucosamine biosynthesis; UDP-N-acetyl-alpha-D-glucosamine from N-acetyl-alpha-D-glucosamine 1-phosphate: step 1/1. The protein operates within bacterial outer membrane biogenesis; LPS lipid A biosynthesis. Catalyzes the last two sequential reactions in the de novo biosynthetic pathway for UDP-N-acetylglucosamine (UDP-GlcNAc). The C-terminal domain catalyzes the transfer of acetyl group from acetyl coenzyme A to glucosamine-1-phosphate (GlcN-1-P) to produce N-acetylglucosamine-1-phosphate (GlcNAc-1-P), which is converted into UDP-GlcNAc by the transfer of uridine 5-monophosphate (from uridine 5-triphosphate), a reaction catalyzed by the N-terminal domain. The polypeptide is Bifunctional protein GlmU (Buchnera aphidicola subsp. Schizaphis graminum (strain Sg)).